A 1101-amino-acid chain; its full sequence is Type II inositol polyphosphate 5-phosphatase 15 (1101 aa).

The segment covering 31-40 (RSAYSSSSSS) has biased composition (low complexity). The interval 31–54 (RSAYSSSSSSGDDESQPSVDDSNK) is disordered. WD repeat units follow at residues 121-162 (LRET…GSGR), 180-219 (FGSA…GIEE), 225-263 (AHRG…GKSL), 403-432 (DDSR…MRWD), 433-481 (GNGN…GGWV), and 483-519 (HSGP…PLDN). Catalytic stretches follow at residues 749-765 (DMVI…DDIT) and 828-843 (KKRI…YRDN). Lys907 participates in a covalent cross-link: Glycyl lysine isopeptide (Lys-Gly) (interchain with G-Cter in ubiquitin).

The protein belongs to the inositol polyphosphate 5-phosphatase family. Mg(2+) serves as cofactor. As to expression, predominantly expressed in interfascicular fibers and vascular bundles. Expressed in seedlings, stems, roots and flowers. Expressed at lower level in mature leaves.

It catalyses the reaction a 1,2-diacyl-sn-glycero-3-phospho-(1D-myo-inositol-4,5-bisphosphate) + H2O = a 1,2-diacyl-sn-glycero-3-phospho-(1D-myo-inositol 4-phosphate) + phosphate. The catalysed reaction is a 1,2-diacyl-sn-glycero-3-phospho-(1D-myo-inositol-3,4,5-trisphosphate) + H2O = a 1,2-diacyl-sn-glycero-3-phospho-(1D-myo-inositol-3,4-bisphosphate) + phosphate. It carries out the reaction 1D-myo-inositol 1,4,5-trisphosphate + H2O = 1D-myo-inositol 1,4-bisphosphate + phosphate. Has phosphatase activity toward PtdIns(4,5)P2, PtdIns(3,4,5)P3 and Ins(1,4,5)P3. Has a higher substrate affinity toward PtdIns(4,5)P2. Required for secondary wall synthesis and actin organization in fiber cells. The sequence is that of Type II inositol polyphosphate 5-phosphatase 15 from Arabidopsis thaliana (Mouse-ear cress).